The chain runs to 129 residues: Natriuretic peptides B (129 aa).

An N-terminal signal peptide occupies residues 1–26; it reads MDPQKALSRTLLLLLFLHLSLLGCRS. Cys107 and Cys123 are disulfide-bonded.

Belongs to the natriuretic peptide family. Post-translationally, the precursor molecule is proteolytically cleaved, possibly by FURIN or CORIN, to produce the active peptide. May undergo further proteolytic cleavage by various proteases such as DPP4, MME and possibly FAP, to give rise to a variety of shorter peptides. May be cleaved at Pro-99 by the prolyl endopeptidase FAP (seprase) activity (in vitro). May be degraded by IDE. During IDE degradation, the resulting products initially increase the activation of NPR1 and can also stimulate NPR2 to produce cGMP before the fragments are completely degraded and inactivated by IDE (in vitro).

The protein resides in the secreted. In terms of biological role, cardiac hormone that plays a key role in mediating cardio-renal homeostasis. May also function as a paracrine antifibrotic factor in the heart. Acts by specifically binding and stimulating NPR1 to produce cGMP, which in turn activates effector proteins that drive various biological responses. Involved in regulating the extracellular fluid volume and maintaining the fluid-electrolyte balance through natriuresis, diuresis, vasorelaxation, and inhibition of renin and aldosterone secretion. Binds the clearance receptor NPR3. This Ovis aries (Sheep) protein is Natriuretic peptides B (NPPB).